A 96-amino-acid polypeptide reads, in one-letter code: Co-chaperonin GroES (96 aa).

It belongs to the GroES chaperonin family. Heptamer of 7 subunits arranged in a ring. Interacts with the chaperonin GroEL.

It is found in the cytoplasm. In terms of biological role, together with the chaperonin GroEL, plays an essential role in assisting protein folding. The GroEL-GroES system forms a nano-cage that allows encapsulation of the non-native substrate proteins and provides a physical environment optimized to promote and accelerate protein folding. GroES binds to the apical surface of the GroEL ring, thereby capping the opening of the GroEL channel. The sequence is that of Co-chaperonin GroES from Polynucleobacter asymbioticus (strain DSM 18221 / CIP 109841 / QLW-P1DMWA-1) (Polynucleobacter necessarius subsp. asymbioticus).